A 52-amino-acid chain; its full sequence is U-scutigerotoxin(01)-Tl1a (52 aa).

An N-terminal signal peptide occupies residues 1-25 (MLAKAMSLLMMFLLVLVIGSVMVSA).

It belongs to the scutigerotoxin-01 family. In terms of processing, contains 1 disulfide bond. Expressed by the venom gland.

It localises to the secreted. The polypeptide is U-scutigerotoxin(01)-Tl1a (Thereuopoda longicornis (Long-legged centipede)).